We begin with the raw amino-acid sequence, 239 residues long: MDKKLHFVSPETGPNSNLDLTPQLAQSSSAFLFEPKNIVPFETALGWQKNFQKNLIEQPFSPQAVWLLEHFSCFTMGRGSDKKNLLFEENNSPLPVFSIERGGEVTHHMPGQIVGYLVLNLSLHKKDLSWYLRELEQVLIDVLDLLGMEGKRVDGLTGVWCEDKKVGSIGIGCKRWVTQHGFSLNVDCDLIGFEKIIPCGLDKVKVGKLSDWIPGIKVCDVTPLLRESVKRRFKLNWEK.

Positions 59–239 constitute a BPL/LPL catalytic domain; the sequence is PFSPQAVWLL…KRRFKLNWEK (181 aa). Residues 101 to 108, 168 to 170, and 181 to 183 contribute to the substrate site; these read RGGEVTHH, SIG, and GFS. C199 (acyl-thioester intermediate) is an active-site residue.

The protein belongs to the LipB family.

The protein localises to the cytoplasm. It carries out the reaction octanoyl-[ACP] + L-lysyl-[protein] = N(6)-octanoyl-L-lysyl-[protein] + holo-[ACP] + H(+). The protein operates within protein modification; protein lipoylation via endogenous pathway; protein N(6)-(lipoyl)lysine from octanoyl-[acyl-carrier-protein]: step 1/2. In terms of biological role, catalyzes the transfer of endogenously produced octanoic acid from octanoyl-acyl-carrier-protein onto the lipoyl domains of lipoate-dependent enzymes. Lipoyl-ACP can also act as a substrate although octanoyl-ACP is likely to be the physiological substrate. The protein is Octanoyltransferase of Prochlorococcus marinus (strain NATL2A).